The chain runs to 348 residues: Probable malate dehydrogenase 2, mitochondrial (348 aa).

The N-terminal 9 residues, 1–9, are a transit peptide targeting the mitochondrion; the sequence is MNKILTRSF. 31-37 provides a ligand contact to NAD(+); that stretch reads GASGQIG. Positions 112 and 118 each coordinate substrate. NAD(+)-binding positions include Asn-125, Gln-132, and 150–152; that span reads VGN. Positions 152 and 183 each coordinate substrate. His-208 functions as the Proton acceptor in the catalytic mechanism.

This sequence belongs to the LDH/MDH superfamily. MDH type 2 family. In terms of assembly, homodimer.

The protein localises to the mitochondrion. It catalyses the reaction (S)-malate + NAD(+) = oxaloacetate + NADH + H(+). Functionally, catalyzes the reversible oxidation of malate to oxaloacetate. This chain is Probable malate dehydrogenase 2, mitochondrial (mdhB), found in Dictyostelium discoideum (Social amoeba).